Here is a 113-residue protein sequence, read N- to C-terminus: Class I hydrophobin 1 (113 aa).

A signal peptide spans 1-17; it reads MQFKFLSTVALATLAVA. 4 disulfides stabilise this stretch: Cys32-Cys92, Cys39-Cys86, Cys40-Cys73, and Cys93-Cys106.

This sequence belongs to the fungal hydrophobin family. As to quaternary structure, self-assembles to form functional amyloid fibrils called rodlets. Self-assembly into fibrillar rodlets occurs spontaneously at hydrophobic:hydrophilic interfaces and the rodlets further associate laterally to form amphipathic monolayers.

The protein resides in the secreted. Its subcellular location is the cell wall. Functionally, aerial growth, conidiation, and dispersal of filamentous fungi in the environment rely upon a capability of their secreting small amphipathic proteins called hydrophobins (HPBs) with low sequence identity. Class I can self-assemble into an outermost layer of rodlet bundles on aerial cell surfaces, conferring cellular hydrophobicity that supports fungal growth, development and dispersal; whereas Class II form highly ordered films at water-air interfaces through intermolecular interactions but contribute nothing to the rodlet structure. CoH1 is an asexual monokaryon-specific class I hydrophobin that is involved in aerial growth of mycelia. The protein is Class I hydrophobin 1 of Coprinopsis cinerea (Inky cap fungus).